A 260-amino-acid polypeptide reads, in one-letter code: Phosphatidylglycerol--prolipoprotein diacylglyceryl transferase (260 aa).

3 helical membrane passes run 16-36 (LEFR…YFIV), 55-75 (VIFS…ILFY), and 87-107 (LFAV…VILA). Residue Arg138 coordinates a 1,2-diacyl-sn-glycero-3-phospho-(1'-sn-glycerol). 2 consecutive transmembrane segments (helical) span residues 198–218 (GVVF…VEFF) and 232–252 (FSMG…MAVL).

This sequence belongs to the Lgt family.

Its subcellular location is the cell inner membrane. It carries out the reaction L-cysteinyl-[prolipoprotein] + a 1,2-diacyl-sn-glycero-3-phospho-(1'-sn-glycerol) = an S-1,2-diacyl-sn-glyceryl-L-cysteinyl-[prolipoprotein] + sn-glycerol 1-phosphate + H(+). Its pathway is protein modification; lipoprotein biosynthesis (diacylglyceryl transfer). Its function is as follows. Catalyzes the transfer of the diacylglyceryl group from phosphatidylglycerol to the sulfhydryl group of the N-terminal cysteine of a prolipoprotein, the first step in the formation of mature lipoproteins. This chain is Phosphatidylglycerol--prolipoprotein diacylglyceryl transferase, found in Geobacter sulfurreducens (strain ATCC 51573 / DSM 12127 / PCA).